The primary structure comprises 141 residues: Glutathione transferase FosA (141 aa).

In terms of domain architecture, VOC spans 4-117 (SLNHLTLAVS…DGHKLELHVG (114 aa)). Positions 7, 67, and 113 each coordinate Mn(2+).

It belongs to the fosfomycin resistance protein family. Homodimer. Mn(2+) serves as cofactor.

Its subcellular location is the cytoplasm. The enzyme catalyses RX + glutathione = an S-substituted glutathione + a halide anion + H(+). Its activity is regulated as follows. Requires the monovalent cation K(+) for optimal activity. Functionally, metalloglutathione transferase which confers resistance to fosfomycin by catalyzing the addition of glutathione to fosfomycin. The sequence is that of Glutathione transferase FosA (fosA) from Serratia marcescens.